The chain runs to 93 residues: Cell division protein CrgA (93 aa).

2 helical membrane-spanning segments follow: residues 31 to 51 (VWFVSLFIGLMLIGLIWLMVF) and 70 to 90 (LGPWNYAIAFAFMITGLLLTM).

It belongs to the CrgA family.

Its subcellular location is the cell membrane. Involved in cell division. This chain is Cell division protein CrgA, found in Mycobacterium bovis (strain ATCC BAA-935 / AF2122/97).